The following is a 427-amino-acid chain: Serine--tRNA ligase (427 aa).

232–234 is an L-serine binding site; it reads TAE. 263-265 provides a ligand contact to ATP; it reads RSE. Glu-286 provides a ligand contact to L-serine. 350–353 contacts ATP; that stretch reads EISS. Ser-385 lines the L-serine pocket.

Belongs to the class-II aminoacyl-tRNA synthetase family. Type-1 seryl-tRNA synthetase subfamily. Homodimer. The tRNA molecule binds across the dimer.

Its subcellular location is the cytoplasm. The catalysed reaction is tRNA(Ser) + L-serine + ATP = L-seryl-tRNA(Ser) + AMP + diphosphate + H(+). It carries out the reaction tRNA(Sec) + L-serine + ATP = L-seryl-tRNA(Sec) + AMP + diphosphate + H(+). It functions in the pathway aminoacyl-tRNA biosynthesis; selenocysteinyl-tRNA(Sec) biosynthesis; L-seryl-tRNA(Sec) from L-serine and tRNA(Sec): step 1/1. In terms of biological role, catalyzes the attachment of serine to tRNA(Ser). Is also able to aminoacylate tRNA(Sec) with serine, to form the misacylated tRNA L-seryl-tRNA(Sec), which will be further converted into selenocysteinyl-tRNA(Sec). This is Serine--tRNA ligase from Lacticaseibacillus casei (strain BL23) (Lactobacillus casei).